The chain runs to 117 residues: Large ribosomal subunit protein eL30B (117 aa).

Residues 1 to 14 show a composition bias toward low complexity; sequence MSAAPTTAPVAAVS. The disordered stretch occupies residues 1–22; sequence MSAAPTTAPVAAVSKKGKKSGD.

It belongs to the eukaryotic ribosomal protein eL30 family. As to quaternary structure, component of the large ribosomal subunit (LSU). Mature yeast ribosomes consist of a small (40S) and a large (60S) subunit. The 40S small subunit contains 1 molecule of ribosomal RNA (18S rRNA) and at least 33 different proteins. The large 60S subunit contains 3 rRNA molecules (25S, 5.8S and 5S rRNA) and at least 46 different proteins.

It is found in the cytoplasm. Component of the ribosome, a large ribonucleoprotein complex responsible for the synthesis of proteins in the cell. The small ribosomal subunit (SSU) binds messenger RNAs (mRNAs) and translates the encoded message by selecting cognate aminoacyl-transfer RNA (tRNA) molecules. The large subunit (LSU) contains the ribosomal catalytic site termed the peptidyl transferase center (PTC), which catalyzes the formation of peptide bonds, thereby polymerizing the amino acids delivered by tRNAs into a polypeptide chain. The nascent polypeptides leave the ribosome through a tunnel in the LSU and interact with protein factors that function in enzymatic processing, targeting, and the membrane insertion of nascent chains at the exit of the ribosomal tunnel. In Schizosaccharomyces pombe (strain 972 / ATCC 24843) (Fission yeast), this protein is Large ribosomal subunit protein eL30B (rpl3002).